The primary structure comprises 273 residues: Urease accessory protein UreD (273 aa).

Belongs to the UreD family. UreD, UreF and UreG form a complex that acts as a GTP-hydrolysis-dependent molecular chaperone, activating the urease apoprotein by helping to assemble the nickel containing metallocenter of UreC. The UreE protein probably delivers the nickel.

Its subcellular location is the cytoplasm. Functionally, required for maturation of urease via the functional incorporation of the urease nickel metallocenter. This is Urease accessory protein UreD from Rhizobium leguminosarum bv. trifolii (strain WSM2304).